The sequence spans 160 residues: Transcription elongation factor GreA (160 aa).

A coiled-coil region spans residues 1-72 (MAEKTYPMTL…QISSLETKIR (72 aa)).

The protein belongs to the GreA/GreB family.

In terms of biological role, necessary for efficient RNA polymerase transcription elongation past template-encoded arresting sites. The arresting sites in DNA have the property of trapping a certain fraction of elongating RNA polymerases that pass through, resulting in locked ternary complexes. Cleavage of the nascent transcript by cleavage factors such as GreA or GreB allows the resumption of elongation from the new 3'terminus. GreA releases sequences of 2 to 3 nucleotides. The polypeptide is Transcription elongation factor GreA (Streptococcus pneumoniae (strain ATCC 700669 / Spain 23F-1)).